Consider the following 458-residue polypeptide: Probable M18 family aminopeptidase 1 (458 aa).

The Zn(2+) site is built by His-95, His-170, and His-434.

The protein belongs to the peptidase M18 family. The cofactor is Zn(2+).

This is Probable M18 family aminopeptidase 1 from Borrelia garinii subsp. bavariensis (strain ATCC BAA-2496 / DSM 23469 / PBi) (Borreliella bavariensis).